A 137-amino-acid polypeptide reads, in one-letter code: Large-conductance mechanosensitive channel (137 aa).

A run of 2 helical transmembrane segments spans residues Val-14–Leu-34 and Gly-81–Val-101.

It belongs to the MscL family. As to quaternary structure, homopentamer.

It localises to the cell membrane. Its function is as follows. Channel that opens in response to stretch forces in the membrane lipid bilayer. May participate in the regulation of osmotic pressure changes within the cell. This Chloroflexus aggregans (strain MD-66 / DSM 9485) protein is Large-conductance mechanosensitive channel.